Here is a 334-residue protein sequence, read N- to C-terminus: Ficolin-1 (334 aa).

Residues 1-17 (MQWPTLWAFSGLLCLCP) form the signal peptide. Residues 47–117 (SCPGFPGPPG…SLGEKELGDT (71 aa)) form a disordered region. A Collagen-like domain is found at 50 to 88 (GFPGPPGPKGEPGSPAGRGERGFQGSPGKMGPAGSKGEP). Positions 117 to 334 (TLCQRGPRSC…KVAEMKIRAS (218 aa)) constitute a Fibrinogen C-terminal domain. Intrachain disulfides connect C119–C147 and C126–C154. The a domain; contributes to trimerization stretch occupies residues 123-162 (PRSCKDLLTRGIFLTGWYTIHLPDCRPLTVLCDMDVDGGG). A b domain; contributes to trimerization region spans residues 163 to 251 (WTVFQRRVDG…LTLGQFLEGT (89 aa)). An N-linked (GlcNAc...) asparagine glycan is attached at N261. 2 residues coordinate Ca(2+): D270 and D272. Residues C278 and C291 are joined by a disulfide bond. 290 to 292 (NCH) contributes to the a carbohydrate binding site. The interval 325 to 334 (KVAEMKIRAS) is p domain.

The protein belongs to the ficolin lectin family. Homotrimer. Interacts with elastin/ELN. Interacts (via Fibrinogen C-terminal domain) with FFAR2. Interacts with CRP; may regulate monocyte activation by FCN1. In terms of tissue distribution, highly expressed in liver and spleen.

Its subcellular location is the secreted. It is found in the cell membrane. Functionally, extracellular lectin functioning as a pattern-recognition receptor in innate immunity. Binds the sugar moieties of pathogen-associated molecular patterns (PAMPs) displayed on microbes and activates the lectin pathway of the complement system. May also activate monocytes through a G protein-coupled receptor, FFAR2, inducing the secretion of interleukin-8/IL-8. Binds preferentially to 9-O-acetylated 2-6-linked sialic acid derivatives and to various glycans containing sialic acid engaged in a 2-3 linkage. The protein is Ficolin-1 (Fcn1) of Mus musculus (Mouse).